The sequence spans 151 residues: Arginine repressor (151 aa).

It belongs to the ArgR family.

It is found in the cytoplasm. It participates in amino-acid biosynthesis; L-arginine biosynthesis [regulation]. In terms of biological role, regulates arginine biosynthesis genes. This Moorella thermoacetica (strain ATCC 39073 / JCM 9320) protein is Arginine repressor.